The primary structure comprises 277 residues: S-formylglutathione hydrolase FrmB (277 aa).

Active-site charge relay system residues include Ser-145, Asp-221, and His-254.

Belongs to the esterase D family.

It catalyses the reaction S-formylglutathione + H2O = formate + glutathione + H(+). In terms of biological role, serine hydrolase involved in the detoxification of formaldehyde. Hydrolyzes S-formylglutathione to glutathione and formate. The polypeptide is S-formylglutathione hydrolase FrmB (frmB) (Escherichia coli O6:H1 (strain CFT073 / ATCC 700928 / UPEC)).